We begin with the raw amino-acid sequence, 511 residues long: Xylose import ATP-binding protein XylG (511 aa).

ABC transporter domains are found at residues 6–244 (LEMR…VGRE) and 261–506 (FEAR…IGKP). 38–45 (GENGAGKS) provides a ligand contact to ATP.

Belongs to the ABC transporter superfamily. Xylose importer (TC 3.A.1.2.4) family. As to quaternary structure, the complex is composed of two ATP-binding proteins (XylG), two transmembrane proteins (XylH) and a solute-binding protein (XylF).

It is found in the cell inner membrane. The catalysed reaction is D-xylose(out) + ATP + H2O = D-xylose(in) + ADP + phosphate + H(+). Part of the ABC transporter complex XylFGH involved in xylose import. Responsible for energy coupling to the transport system. This chain is Xylose import ATP-binding protein XylG, found in Brucella abortus (strain 2308).